We begin with the raw amino-acid sequence, 298 residues long: Cyclic dof factor 1 (298 aa).

The tract at residues 27 to 46 is disordered; it reads EEEEKNQNKTLTDQSEKDKT. Residues 54–108 form a Dof-type zinc finger; it reads LPCPRCNSMETKFCYYNNYNVNQPRHFCKACQRYWTSGGTMRSVPIGAGRRKNKN. Residues Cys56, Cys59, Cys81, and Cys84 each coordinate Zn(2+). The interval 200–231 is disordered; that stretch reads SSSPTSTLGKHSRDEDETVKQKQRNGSVLVPK. Residues 210–219 are compositionally biased toward basic and acidic residues; that stretch reads HSRDEDETVK.

Interacts with ADO2 (via kelch repeats), ADO3 (via kelch repeats) and GI (via N-terminus). Ubiquitinated. Expressed in the vascular tissues of cotyledons, leaves and hypocotyls and in stomata. Not detected in roots.

The protein resides in the nucleus. In terms of biological role, transcription factor that binds specifically to a 5'-AA[AG]G-3' consensus core sequence. A flanking TGT sequence contributes to the specificity of binding. Regulates a photoperiodic flowering response. Transcriptional repressor of 'CONSTANS' expression. The DNA-binding ability is not modulated by 'GIGANTEA' but the stability of CDF1 is controlled by the proteasome-dependent pathway. Ubiquitinated by the SCF(ADO3) E3 ubiquitin ligase complex. Binds to the FT promoter in the morning. This chain is Cyclic dof factor 1 (CDF1), found in Arabidopsis thaliana (Mouse-ear cress).